The chain runs to 237 residues: Endonuclease V (237 aa).

Asp-46 and Asp-114 together coordinate Mg(2+).

The protein belongs to the endonuclease V family. Requires Mg(2+) as cofactor.

It localises to the cytoplasm. The enzyme catalyses Endonucleolytic cleavage at apurinic or apyrimidinic sites to products with a 5'-phosphate.. DNA repair enzyme involved in the repair of deaminated bases. Selectively cleaves double-stranded DNA at the second phosphodiester bond 3' to a deoxyinosine leaving behind the intact lesion on the nicked DNA. The sequence is that of Endonuclease V from Xanthomonas oryzae pv. oryzae (strain PXO99A).